Consider the following 315-residue polypeptide: Homeobox-leucine zipper protein HAT3 (315 aa).

Positions 140 to 163 (SCSLGGGSDDEDGSGNGDDSSRKK) are disordered. The homeobox DNA-binding region spans 159 to 218 (SSRKKLRLSKEQALVLEETFKEHSTLNPKQKMALAKQLNLRTRQVEVWFQNRRARTKLKQ). The leucine-zipper stretch occupies residues 226–247 (LKRCCENLTDENRRLQKEVSEL). Residues 280–305 (SSSSVAPPVMNSSSPMGPMSPWAAMP) show a composition bias toward low complexity. The disordered stretch occupies residues 280-315 (SSSSVAPPVMNSSSPMGPMSPWAAMPLRQRPAAGSH).

Belongs to the HD-ZIP homeobox family. Class II subfamily.

The protein localises to the nucleus. In terms of biological role, probable transcription factor. The sequence is that of Homeobox-leucine zipper protein HAT3 (HAT3) from Arabidopsis thaliana (Mouse-ear cress).